The chain runs to 2210 residues: RNA-directed RNA polymerase L (2210 aa).

The endonuclease stretch occupies residues 26–285 (KAIFLSQTKL…KCAIMSEEDS (260 aa)). Mn(2+) contacts are provided by Glu51, Asp88, and Glu101. Residue Lys114 is part of the active site. In terms of domain architecture, RdRp catalytic spans 1163 to 1359 (LDMKSVVRQG…FLSDKLNKFV (197 aa)). Asp1319 is a binding site for Mg(2+).

This sequence belongs to the Bunyavirales RNA polymerase family. As to quaternary structure, homomultimer; the oligomeric structure is essential for the polymerase activity. Interacts with nucleoprotein N. Interacts with protein Z; this interaction inhibits viral transcription and replication, Z partially blocks the product exit tunnel for the releasing nascent RNA product. It depends on Mn(2+) as a cofactor. Mg(2+) is required as a cofactor.

It localises to the virion. The protein localises to the host cytoplasm. It catalyses the reaction RNA(n) + a ribonucleoside 5'-triphosphate = RNA(n+1) + diphosphate. In terms of biological role, RNA-dependent RNA polymerase, which is responsible for the replication and transcription of the viral RNA genome using antigenomic RNA as an intermediate. During transcription, synthesizes subgenomic RNAs and assures their capping by a cap-snatching mechanism, which involves the endonuclease activity cleaving the host capped pre-mRNAs. These short capped RNAs are then used as primers for viral transcription. The 3'-end of subgenomic mRNAs molecules are heterogeneous and not polyadenylated. The replicase function is to direct synthesis of antigenomic and genomic RNA which are encapsidated and non capped. As a consequence of the use of the same enzyme for both transcription and replication, these mechanisms need to be well coordinated. These processes may be regulated by proteins N and Z in a dose-dependent manner. Z protein inhibits the viral polymerase L und thus the viral transcription and RNA synthesis. This is RNA-directed RNA polymerase L from Sigmodon alstoni (PIRV).